We begin with the raw amino-acid sequence, 408 residues long: tRNA-specific 2-thiouridylase MnmA (408 aa).

ATP-binding positions include 38 to 45 (GMSGGVDS) and M64. The segment at 124-126 (NPD) is interaction with target base in tRNA. Residue C129 is the Nucleophile of the active site. An intrachain disulfide couples C129 to C231. G153 provides a ligand contact to ATP. The tract at residues 181–183 (KDQ) is interaction with tRNA. Residue C231 is the Cysteine persulfide intermediate of the active site. The tract at residues 348-349 (RY) is interaction with tRNA.

Belongs to the MnmA/TRMU family.

The protein localises to the cytoplasm. It carries out the reaction S-sulfanyl-L-cysteinyl-[protein] + uridine(34) in tRNA + AH2 + ATP = 2-thiouridine(34) in tRNA + L-cysteinyl-[protein] + A + AMP + diphosphate + H(+). Catalyzes the 2-thiolation of uridine at the wobble position (U34) of tRNA, leading to the formation of s(2)U34. The polypeptide is tRNA-specific 2-thiouridylase MnmA (Psychrobacter arcticus (strain DSM 17307 / VKM B-2377 / 273-4)).